Here is a 159-residue protein sequence, read N- to C-terminus: Type-1 angiotensin II receptor-associated protein (159 aa).

At 1 to 23 (MELPAVNLKVILLGHWLLTTWGC) the chain is on the extracellular side. Residues 24-44 (IVFSGSYAWANFTILALGVWA) form a helical membrane-spanning segment. The Cytoplasmic segment spans residues 45 to 55 (VAQRDSIDAIS). A helical transmembrane segment spans residues 56 to 76 (MFLGGLLATIFLDIVHISIFY). The Extracellular portion of the chain corresponds to 77–86 (PRVSLTDTGR). The helical transmembrane segment at 87 to 107 (FGVGMAILSLLLKPLSCCFVY) threads the bilayer. At 108-159 (HMYRERGGELLVHTGFLGSSQDRSAYQTIDSAEAPADPFAVPEGRSQDARGY) the chain is on the cytoplasmic side. Positions 110–122 (YRERGGELLVHTG) are interaction with AGTR1. 2 positions are modified to phosphoserine: Ser-126 and Ser-127. Thr-135 carries the post-translational modification Phosphothreonine. A phosphoserine mark is found at Ser-138 and Ser-153. The disordered stretch occupies residues 140 to 159 (EAPADPFAVPEGRSQDARGY).

As to quaternary structure, interacts with RACK1, and with the C-terminal region of AGTR1. Ubiquitous but more abundant in kidney, heart, pancreas and thyroid.

It is found in the endoplasmic reticulum membrane. It localises to the golgi apparatus membrane. Its subcellular location is the cytoplasmic vesicle membrane. Its function is as follows. Appears to be a negative regulator of type-1 angiotensin II receptor-mediated signaling by regulating receptor internalization as well as mechanism of receptor desensitization such as phosphorylation. Also induces a decrease in cell proliferation and angiotensin II-stimulated transcriptional activity. In Homo sapiens (Human), this protein is Type-1 angiotensin II receptor-associated protein (AGTRAP).